Reading from the N-terminus, the 129-residue chain is Protein Turandot A2 (129 aa).

The signal sequence occupies residues 1–21 (MNSSTSLMCFALLLISPLCMG). N-linked (GlcNAc...) asparagine glycosylation is present at Asn49.

It belongs to the Turandot family.

Its subcellular location is the secreted. A humoral factor that plays a role in stress tolerance; gives increased resistance to the lethal effects of bacterial challenge and stress. Regulated by the JAK/STAT pathway and NF-KB-like Relish pathway in the fat body, upd3 in the hemocytes and Mekk1 in response to septic injury and consequent immune response. The polypeptide is Protein Turandot A2 (TotA2) (Drosophila simulans (Fruit fly)).